The following is a 231-amino-acid chain: 7-cyano-7-deazaguanine synthase (231 aa).

8 to 18 contacts ATP; the sequence is FSGGQDSTTCL. Zn(2+) is bound by residues Cys-187, Cys-196, Cys-199, and Cys-202.

The protein belongs to the QueC family. The cofactor is Zn(2+).

It catalyses the reaction 7-carboxy-7-deazaguanine + NH4(+) + ATP = 7-cyano-7-deazaguanine + ADP + phosphate + H2O + H(+). The protein operates within purine metabolism; 7-cyano-7-deazaguanine biosynthesis. Its function is as follows. Catalyzes the ATP-dependent conversion of 7-carboxy-7-deazaguanine (CDG) to 7-cyano-7-deazaguanine (preQ(0)). In Vibrio cholerae serotype O1 (strain ATCC 39541 / Classical Ogawa 395 / O395), this protein is 7-cyano-7-deazaguanine synthase.